The sequence spans 477 residues: Glycogen synthase (477 aa).

An ADP-alpha-D-glucose-binding site is contributed by Lys15.

Belongs to the glycosyltransferase 1 family. Bacterial/plant glycogen synthase subfamily.

The catalysed reaction is [(1-&gt;4)-alpha-D-glucosyl](n) + ADP-alpha-D-glucose = [(1-&gt;4)-alpha-D-glucosyl](n+1) + ADP + H(+). Its pathway is glycan biosynthesis; glycogen biosynthesis. Synthesizes alpha-1,4-glucan chains using ADP-glucose. This is Glycogen synthase from Shigella dysenteriae serotype 1 (strain Sd197).